Consider the following 132-residue polypeptide: uncharacterized protein (132 aa).

K59 participates in a covalent cross-link: Glycyl lysine isopeptide (Lys-Gly) (interchain with G-Cter in SAMP2).

It belongs to the OsmC/Ohr family.

This is an uncharacterized protein from Haloferax volcanii (strain ATCC 29605 / DSM 3757 / JCM 8879 / NBRC 14742 / NCIMB 2012 / VKM B-1768 / DS2) (Halobacterium volcanii).